The following is a 329-amino-acid chain: 4-hydroxythreonine-4-phosphate dehydrogenase (329 aa).

Substrate contacts are provided by His-136 and Thr-137. A divalent metal cation contacts are provided by His-166, His-211, and His-266. 3 residues coordinate substrate: Lys-274, Asn-283, and Arg-292.

The protein belongs to the PdxA family. As to quaternary structure, homodimer. Zn(2+) is required as a cofactor. The cofactor is Mg(2+). It depends on Co(2+) as a cofactor.

It is found in the cytoplasm. It catalyses the reaction 4-(phosphooxy)-L-threonine + NAD(+) = 3-amino-2-oxopropyl phosphate + CO2 + NADH. It functions in the pathway cofactor biosynthesis; pyridoxine 5'-phosphate biosynthesis; pyridoxine 5'-phosphate from D-erythrose 4-phosphate: step 4/5. Catalyzes the NAD(P)-dependent oxidation of 4-(phosphooxy)-L-threonine (HTP) into 2-amino-3-oxo-4-(phosphooxy)butyric acid which spontaneously decarboxylates to form 3-amino-2-oxopropyl phosphate (AHAP). This is 4-hydroxythreonine-4-phosphate dehydrogenase from Escherichia coli O81 (strain ED1a).